Consider the following 686-residue polypeptide: Translation initiation factor IF-2 (686 aa).

The tract at residues 53–105 is disordered; that stretch reads EKPSVADEFEVEEKVVRSKKNSNKKKKKGKGNEDKRQENFAGRQQTQTVETPD. A compositionally biased stretch (basic residues) spans 69–81; that stretch reads RSKKNSNKKKKKG. Residues 188-357 form the tr-type G domain; sequence ERPAVVTIMG…LLVSEVEEYK (170 aa). The segment at 197 to 204 is G1; the sequence is GHVDHGKT. 197–204 serves as a coordination point for GTP; that stretch reads GHVDHGKT. The tract at residues 222-226 is G2; sequence GITQH. The G3 stretch occupies residues 243–246; the sequence is DTPG. GTP-binding positions include 243-247 and 297-300; these read DTPGH and NKMD. The tract at residues 297 to 300 is G4; sequence NKMD. The tract at residues 333–335 is G5; that stretch reads SAI.

The protein belongs to the TRAFAC class translation factor GTPase superfamily. Classic translation factor GTPase family. IF-2 subfamily.

Its subcellular location is the cytoplasm. Functionally, one of the essential components for the initiation of protein synthesis. Protects formylmethionyl-tRNA from spontaneous hydrolysis and promotes its binding to the 30S ribosomal subunits. Also involved in the hydrolysis of GTP during the formation of the 70S ribosomal complex. The sequence is that of Translation initiation factor IF-2 from Bacillus cereus (strain ATCC 10987 / NRS 248).